Consider the following 173-residue polypeptide: Bifunctional protein PyrR (173 aa).

The short motif at 94–106 (VILIDDVLYTGRT) is the PRPP-binding element.

Belongs to the purine/pyrimidine phosphoribosyltransferase family. PyrR subfamily. Homodimer and homohexamer; in equilibrium.

It catalyses the reaction UMP + diphosphate = 5-phospho-alpha-D-ribose 1-diphosphate + uracil. Regulates transcriptional attenuation of the pyrimidine nucleotide (pyr) operon by binding in a uridine-dependent manner to specific sites on pyr mRNA. This disrupts an antiterminator hairpin in the RNA and favors formation of a downstream transcription terminator, leading to a reduced expression of downstream genes. In terms of biological role, also displays a weak uracil phosphoribosyltransferase activity which is not physiologically significant. This chain is Bifunctional protein PyrR, found in Streptococcus gordonii (strain Challis / ATCC 35105 / BCRC 15272 / CH1 / DL1 / V288).